A 165-amino-acid polypeptide reads, in one-letter code: MDGTSTDTSAQQAEGRTVDIAGIMRAIPHRYPFLLIDRVVELVPNVSAIGVKNVSVNESFFQGHFPGHPVMPGVLIIESMAQTAAVLVVETLGPEEAGKVVYFMSVEGAKFRRPVVPGDVLRIHVAKERNRGNVWKFNAVARVDGVAVAEATYAAMIMDKKAGEG.

His64 is an active-site residue.

Belongs to the thioester dehydratase family. FabZ subfamily.

It is found in the cytoplasm. It catalyses the reaction a (3R)-hydroxyacyl-[ACP] = a (2E)-enoyl-[ACP] + H2O. In terms of biological role, involved in unsaturated fatty acids biosynthesis. Catalyzes the dehydration of short chain beta-hydroxyacyl-ACPs and long chain saturated and unsaturated beta-hydroxyacyl-ACPs. This chain is 3-hydroxyacyl-[acyl-carrier-protein] dehydratase FabZ, found in Acidiphilium cryptum (strain JF-5).